Here is a 424-residue protein sequence, read N- to C-terminus: Histidine--tRNA ligase (424 aa).

Positions Met1–Pro22 are disordered.

The protein belongs to the class-II aminoacyl-tRNA synthetase family. As to quaternary structure, homodimer.

It is found in the cytoplasm. It catalyses the reaction tRNA(His) + L-histidine + ATP = L-histidyl-tRNA(His) + AMP + diphosphate + H(+). This is Histidine--tRNA ligase from Rubrobacter xylanophilus (strain DSM 9941 / JCM 11954 / NBRC 16129 / PRD-1).